We begin with the raw amino-acid sequence, 434 residues long: Putative D-alanyl-D-alanine carboxypeptidase (434 aa).

The helical; Signal-anchor transmembrane segment at 7-25 (YLSLLAVSCSVSAAKYPVL) threads the bilayer.

Belongs to the peptidase S12 family. YfeW subfamily.

The protein localises to the cell inner membrane. The catalysed reaction is Preferential cleavage: (Ac)2-L-Lys-D-Ala-|-D-Ala. Also transpeptidation of peptidyl-alanyl moieties that are N-acyl substituents of D-alanine.. Its function is as follows. Penicillin-binding protein. Has low DD-carboxypeptidase activity. The protein is Putative D-alanyl-D-alanine carboxypeptidase of Escherichia coli (strain K12).